Reading from the N-terminus, the 1726-residue chain is Merozoite surface protein 1 (1726 aa).

The N-terminal stretch at M1–C19 is a signal peptide. Low complexity predominate over residues K61–S124. The interval K61–A149 is disordered. Polar residues predominate over residues R125–T134. An N-linked (GlcNAc...) asparagine glycan is attached at N133. The segment covering S135 to A144 has biased composition (low complexity). 4 N-linked (GlcNAc...) asparagine glycosylation sites follow: N272, N501, N567, and N638. Residues S735 to T771 form a disordered region. The span at E755–E765 shows a compositional bias: acidic residues. N-linked (GlcNAc...) asparagine glycans are attached at residues N827, N924, N944, N990, N1016, N1114, and N1221. The segment covering T914–N952 has biased composition (low complexity). The segment at T914–A961 is disordered. Disordered stretches follow at residues V1254 to P1284 and K1476 to K1497. Positions V1270–P1284 are enriched in polar residues. Over residues S1481–P1490 the composition is skewed to pro residues. An N-linked (GlcNAc...) asparagine glycan is attached at N1613. 2 EGF-like domains span residues H1617–P1657 and N1658–S1705. Intrachain disulfides connect C1619–C1630, C1624–C1640, C1642–C1653, C1661–C1674, C1668–C1688, and C1690–C1704. S1705 is lipidated: GPI-anchor amidated serine. Residues S1706 to I1726 constitute a propeptide, removed in mature form.

Forms a complex composed of subunits p83, p30, p38, and p42 which remain non-covalently associated; the complex is formed at the merozoite surface prior to egress from host erythrocytes. Forms a complex composed of processed MSP1 subunits, MSP6 subunit p36 and MSP7; the complex is formed at the merozoite surface prior to egress from host erythrocytes. Within the complex, interacts (via subunit p38) with MSP6 subunit p36 and (via subunits p83, p30 and p38) with MSP7 (via subunit p22). Forms a complex composed of MSP1, MSP6, DBLMSP1 and DBLMSP2. Within the complex, interacts (via subunit p38) with DBLMSP1 and DBLMSP2. Forms a complex composed of MSP1, and rhoptry proteins RhopH3, RAP1 and CLAG9/RhopH3. Within the complex, interacts (via subunits p42 and p19) with RhopH3 (via C-terminus). Forms a complex composed of MSP1, MSP6, MSP7, MSP9 and MSP3; within the complex, MSP6 and MSP9 mediate the binding to the host erythrocyte. Interacts (via subunits p19 and p42) with MSP9; the interaction is direct; MSP1 subunits p19 or p42, and MSP9 form a co-ligand complex that interacts with host SLC4A1/Band 3 protein. May interact with PFD6. Interacts with host spectrin. As to quaternary structure, interacts with host glycophorin GYPA in a sialic acid-independent manner. In terms of assembly, interacts with host proinflammatory cytokine S100P; the interaction blocks S100P inflammatory and chemotactic activities. Interacts with host SLC4A1/Band 3 (via 5ABC region) on the host erythrocyte surface in a sialic acid-independent manner. In terms of processing, the p190 precursor is cleaved by SUB1 prior to merozoite egress into 4 subunits p83, p30, p38, and p42 which remain non-covalently associated. SUB1-mediated proteolytic cleavage occurs in an orderly manner; the first cleavage occurs at the p30/p38 site, followed by cleavage at the p83/p30 site, the last cleavage occurs at the p38/p42 site. The order of cleavage is essential for parasite viability. SUB1-mediated processing is essential for merozoite egress. In a second processing step during erythrocyte invasion, p42 is cleaved by SUB2 into p33 and p19; the latter remains attached to the merozoite surface via its GPI-anchor and is endocytosed during the subsequent ring stage.

Its subcellular location is the cell membrane. It is found in the secreted. It localises to the vacuole membrane. During the asexual blood stage, involved in merozoite egress from host erythrocytes possibly via its interaction with the host cytoskeleton protein spectrin resulting in the destabilization of the host cytoskeleton and thus leading to erythrocyte cell membrane rupture. Involved in the binding to host erythrocytes and is required for host erythrocyte invasion. Functionally, by binding to host proinflammatory cytokine S100P may interfere with host immune responses. In terms of biological role, involved in merozoite invasion of host erythrocytes. May play a role in the biogenesis and/or function of the food vacuole during the intraerythrocytic development. The sequence is that of Merozoite surface protein 1 from Plasmodium falciparum (isolate Palo Alto / Uganda).